A 32-amino-acid polypeptide reads, in one-letter code: Dermatoxin-J1 (32 aa).

Glutamine amide is present on Q32.

In terms of tissue distribution, expressed by the skin glands.

Its subcellular location is the secreted. Its function is as follows. Antimicrobial peptide. This is Dermatoxin-J1 from Phasmahyla jandaia (Jandaia leaf frog).